Here is a 240-residue protein sequence, read N- to C-terminus: Biosynthetic peptidoglycan transglycosylase (240 aa).

Residues 15 to 35 (WMVYLGAVVAIAWLATQAFYF) traverse the membrane as a helical segment.

Belongs to the glycosyltransferase 51 family.

It localises to the cell inner membrane. It catalyses the reaction [GlcNAc-(1-&gt;4)-Mur2Ac(oyl-L-Ala-gamma-D-Glu-L-Lys-D-Ala-D-Ala)](n)-di-trans,octa-cis-undecaprenyl diphosphate + beta-D-GlcNAc-(1-&gt;4)-Mur2Ac(oyl-L-Ala-gamma-D-Glu-L-Lys-D-Ala-D-Ala)-di-trans,octa-cis-undecaprenyl diphosphate = [GlcNAc-(1-&gt;4)-Mur2Ac(oyl-L-Ala-gamma-D-Glu-L-Lys-D-Ala-D-Ala)](n+1)-di-trans,octa-cis-undecaprenyl diphosphate + di-trans,octa-cis-undecaprenyl diphosphate + H(+). It functions in the pathway cell wall biogenesis; peptidoglycan biosynthesis. In terms of biological role, peptidoglycan polymerase that catalyzes glycan chain elongation from lipid-linked precursors. The protein is Biosynthetic peptidoglycan transglycosylase of Paraburkholderia phytofirmans (strain DSM 17436 / LMG 22146 / PsJN) (Burkholderia phytofirmans).